A 385-amino-acid chain; its full sequence is Putative glutamate--cysteine ligase 2 (385 aa).

This sequence belongs to the glutamate--cysteine ligase type 2 family. YbdK subfamily.

It carries out the reaction L-cysteine + L-glutamate + ATP = gamma-L-glutamyl-L-cysteine + ADP + phosphate + H(+). Functionally, ATP-dependent carboxylate-amine ligase which exhibits weak glutamate--cysteine ligase activity. The chain is Putative glutamate--cysteine ligase 2 from Herpetosiphon aurantiacus (strain ATCC 23779 / DSM 785 / 114-95).